The primary structure comprises 425 residues: Interferon-activable protein 211 (425 aa).

The Pyrin domain occupies Met1–Glu88. Basic and acidic residues predominate over residues Arg86–Gly99. Residues Arg86 to Val223 are disordered. Positions Thr122–Ala153 are enriched in low complexity. 4 consecutive repeat copies span residues Thr129 to Gly135, Thr136 to Gly142, Thr143 to Gly149, and Thr150 to Arg156. Positions Thr129 to Gln177 are 4 X 7 AA tandem repeats of T-S-T-A-Q-A-[GR]. Over residues Met159–Asp176 the composition is skewed to basic and acidic residues. Residues Ser190–Ala206 show a composition bias toward low complexity. The segment covering Lys207–Ile218 has biased composition (polar residues). Residues Pro213–Thr413 form the HIN-200 domain.

Belongs to the HIN-200 family. As to quaternary structure, interacts with HOXB2. In terms of tissue distribution, mononuclear phagocytes.

It is found in the nucleus. Its function is as follows. Inhibits cell growth via p53/TP53 and RB1-dependent and independent pathways. May work in synergy with TP53 to promote the transcription of CDKN1A/P21. In Mus musculus (Mouse), this protein is Interferon-activable protein 211.